Consider the following 442-residue polypeptide: GTPase Der (442 aa).

EngA-type G domains follow at residues 3 to 167 (PTIV…PPDV) and 177 to 350 (PRIA…AAAM). Residues 9–16 (GRPNVGKS), 56–60 (DTAGF), 119–122 (NKSE), 183–190 (GRPNVGKS), 230–234 (DTAGL), and 295–298 (NKWD) each bind GTP. Residues 351-435 (VNLSTPRLTR…PLRIQFRTAH (85 aa)) enclose the KH-like domain.

This sequence belongs to the TRAFAC class TrmE-Era-EngA-EngB-Septin-like GTPase superfamily. EngA (Der) GTPase family. Associates with the 50S ribosomal subunit.

GTPase that plays an essential role in the late steps of ribosome biogenesis. This is GTPase Der from Aromatoleum aromaticum (strain DSM 19018 / LMG 30748 / EbN1) (Azoarcus sp. (strain EbN1)).